A 513-amino-acid chain; its full sequence is Histone acetyltransferase KAT5 (513 aa).

The region spanning Ile-8–Leu-65 is the Tudor-knot domain. An N6-acetyllysine modification is found at Lys-52. The tract at residues Gln-69 to Leu-106 is disordered. Ser-86 bears the Phosphoserine mark. Position 90 is a phosphoserine; by CDK1 and CDK9 (Ser-90). N6-acetyllysine; by autocatalysis occurs at positions 104 and 120. The tract at residues Arg-122–Val-217 is disordered. Residues Pro-133–His-144 are compositionally biased toward polar residues. An N6-acetyllysine; by autocatalysis mark is found at Lys-148, Lys-150, Lys-187, and Lys-189. Ser-199 is subject to Phosphoserine. The region spanning Thr-227–Pro-504 is the MYST-type HAT domain. Residues Leu-260–Leu-285 form a C2HC MYST-type zinc finger. The residue at position 327 (Lys-327) is an N6-acetyllysine; by autocatalysis. An interaction with ATF2 region spans residues Ala-368 to Trp-513. Residues Ile-370–Thr-372 and Gln-377–Lys-383 each bind acetyl-CoA. Glu-403 acts as the Proton donor/acceptor in catalysis. Acetyl-CoA contacts are provided by Ser-407 and Ser-416. Lys-430 participates in a covalent cross-link: Glycyl lysine isopeptide (Lys-Gly) (interchain with G-Cter in SUMO1); alternate. A Glycyl lysine isopeptide (Lys-Gly) (interchain with G-Cter in SUMO2); alternate cross-link involves residue Lys-430. Lys-451 participates in a covalent cross-link: Glycyl lysine isopeptide (Lys-Gly) (interchain with G-Cter in SUMO1).

It belongs to the MYST (SAS/MOZ) family. Component of the NuA4 histone acetyltransferase complex which contains the catalytic subunit KAT5/TIP60 and the subunits EP400, TRRAP/PAF400, BRD8/SMAP, EPC1, DMAP1/DNMAP1, RUVBL1/TIP49, RUVBL2, ING3, actin, ACTL6A/BAF53A, MORF4L1/MRG15, MORF4L2/MRGX, MRGBP, YEATS4/GAS41, VPS72/YL1 and MEAF6. KAT5/TIP60, EPC1, and ING3 together constitute a minimal HAT complex termed Piccolo NuA4. The NuA4 complex interacts with MYC. Interacts with ATM. Interacts with JADE1. Interacts with PLA2G4A/CPLA2, EDNRA and HDAC7. Interacts with the cytoplasmic tail of APP and APBB1/FE65. Interacts with TRIM24 and TRIM68. Forms a complex with SENP6 and UBE2I in response to UV irradiation. Identified in a complex with HINT1. Interacts with ATF2 and CUL3. Interacts with NR1D2 (via N-terminus). Component of a SWR1-like complex. Interacts with FOXP3. Interacts with ZBTB49. Interacts with SRF. Interacts with ATF3; promoting autoacetylation and deubiquitination by USP7. Interacts with EP300/p300; interaction promotes KAT5 autoacetylation. Interacts with PRKDC; interaction is impaired following KAT5 sumoylation. Interacts with GPR50. Interacts with NME3; this interaction enables recruitment of NME3 at DNA damage sites where it plays a role in the repair of DNA. In terms of processing, phosphorylated on Ser-86 and Ser-90; enhanced during G2/M phase. The phosphorylated form has a higher activity. Phosphorylation at Ser-90 by CDK1 or CDK9 is a prerequisite for phosphorylation at Ser-86 by GSK3. Phosphorylation at Ser-86 by GSK3 (GSK3A or GSK3B) activates acetyltransferase and acyltransferase activity. Phosphorylation at Ser-90 by CDK9 promotes KAT5 recruitment to chromatin. Phosphorylation by VRK1 following DNA damage promotes KAT5 association with chromatin and histone acetyltransferase activity. Post-translationally, autoacetylated. Autoacetylation is required for histone acetyltransferase activity. Autoacetylation at Lys-327 is facilitated by interaction with EP300/p300: it prevents ubiquitination and subsequent degradation by the proteasome and promotes acetylation of target proteins. Deacetylated by HDAC3 and SIRT1. Deacetylation by HDAC3 promotes its ubiquitination and cytoplasmic localization. Sumoylated by UBE2I at Lys-430 and Lys-451, leading to increase of its histone acetyltransferase activity in UV-induced DNA damage response, as well as its translocation to nuclear bodies. Sumoylation with SUMO2 by PIAS4 at Lys-430 promotes repair of DNA double-strand breaks (DSBs) via homologous recombination (HR). Sumoylation by PIAS4 impairs interaction with PRKDC, inhibiting non-homologous end joining (NHEJ)-mediated repair of DSBs, thereby facilitating HR. Desumoylated by SENP3. In terms of processing, ubiquitinated by MDM2, leading to its proteasome-dependent degradation. Ubiquitination is prevented by autoacetylation at Lys-327. Ubiquitinated following deacetylation by HDAC3, leading to cytoplasmic localization. Deubiquitinated by USP7 following interaction with ATF3, promoting its stabilization. In terms of tissue distribution, expressed in testis, heart, brain, kidney and liver. Weakly expressed in lung.

The protein localises to the nucleus. Its subcellular location is the chromosome. The protein resides in the cytoplasm. It localises to the centromere. It is found in the kinetochore. The protein localises to the cytoskeleton. Its subcellular location is the spindle pole. The protein resides in the nucleolus. It localises to the perinuclear region. It carries out the reaction L-lysyl-[histone] + acetyl-CoA = N(6)-acetyl-L-lysyl-[histone] + CoA + H(+). It catalyses the reaction L-lysyl-[protein] + acetyl-CoA = N(6)-acetyl-L-lysyl-[protein] + CoA + H(+). The enzyme catalyses (2E)-butenoyl-CoA + L-lysyl-[protein] = N(6)-(2E)-butenoyl-L-lysyl-[protein] + CoA + H(+). The catalysed reaction is 2-hydroxyisobutanoyl-CoA + L-lysyl-[protein] = N(6)-(2-hydroxyisobutanoyl)-L-lysyl-[protein] + CoA + H(+). It carries out the reaction (S)-lactoyl-CoA + L-lysyl-[protein] = N(6)-[(S)-lactoyl]-L-lysyl-[protein] + CoA + H(+). Its activity is regulated as follows. Acyltransferase and acetyltransferase activities are activated by phosphorylation and autoacetylation. Autoacetylation activates the histone acetyltransferase activity. In terms of biological role, catalytic subunit of the NuA4 histone acetyltransferase complex, a multiprotein complex involved in transcriptional activation of select genes principally by acetylation of nucleosomal histones H2A and H4. Histone acetylation alters nucleosome-DNA interactions and promotes interaction of the modified histones with other proteins which positively regulate transcription. The NuA4 histone acetyltransferase complex is required for the activation of transcriptional programs associated with proto-oncogene mediated growth induction, tumor suppressor mediated growth arrest and replicative senescence, apoptosis, and DNA repair. The NuA4 complex plays a direct role in repair of DNA double-strand breaks (DSBs) by promoting homologous recombination (HR): the complex inhibits TP53BP1 binding to chromatin via MBTD1, which recognizes and binds histone H4 trimethylated at 'Lys-20' (H4K20me), and KAT5 that catalyzes acetylation of 'Lys-15' of histone H2A (H2AK15ac), thereby blocking the ubiquitination mark required for TP53BP1 localization at DNA breaks. Also involved in DSB repair by mediating acetylation of 'Lys-5' of histone H2AX (H2AXK5ac), promoting NBN/NBS1 assembly at the sites of DNA damage. The NuA4 complex plays a key role in hematopoietic stem cell maintenance and is required to maintain acetylated H2A.Z/H2AZ1 at MYC target genes. The NuA4 complex is also required for spermatid development by promoting acetylation of histones: histone hyperacetylation is required for histone replacement during the transition from round to elongating spermatids. Component of a SWR1-like complex that specifically mediates the removal of histone H2A.Z/H2AZ1 from the nucleosome. Also acetylates non-histone proteins, such as BMAL1, ATM, AURKB, CHKA, CGAS, ERCC4/XPF, LPIN1, TP53/p53, NDC80/HEC1, NR1D2, RAN, SOX4, FOXP3, SQSTM1, ULK1 and RUBCNL/Pacer. Directly acetylates and activates ATM. Promotes nucleotide excision repair (NER) by mediating acetylation of ERCC4/XPF, thereby promoting formation of the ERCC4-ERCC1 complex. Relieves NR1D2-mediated inhibition of APOC3 expression by acetylating NR1D2. Acts as a regulator of regulatory T-cells (Treg) by catalyzing FOXP3 acetylation, thereby promoting FOXP3 transcriptional repressor activity. Involved in skeletal myoblast differentiation by mediating acetylation of SOX4. Catalyzes acetylation of APBB1/FE65, increasing its transcription activator activity. Promotes transcription elongation during the activation phase of the circadian cycle by catalyzing acetylation of BMAL1, promoting elongation of circadian transcripts. Together with GSK3 (GSK3A or GSK3B), acts as a regulator of autophagy: phosphorylated at Ser-86 by GSK3 under starvation conditions, leading to activate acetyltransferase activity and promote acetylation of key autophagy regulators, such as ULK1 and RUBCNL/Pacer. Acts as a regulator of the cGAS-STING innate antiviral response by catalyzing acetylation the N-terminus of CGAS, thereby promoting CGAS DNA-binding and activation. Also regulates lipid metabolism by mediating acetylation of CHKA or LPIN1. Promotes lipolysis of lipid droplets following glucose deprivation by mediating acetylation of isoform 1 of CHKA, thereby promoting monomerization of CHKA and its conversion into a tyrosine-protein kinase. Acts as a regulator of fatty-acid-induced triacylglycerol synthesis by catalyzing acetylation of LPIN1, thereby promoting the synthesis of diacylglycerol. In addition to protein acetyltransferase, can use different acyl-CoA substrates, such as (2E)-butenoyl-CoA (crotonyl-CoA), S-lactoyl-CoA (lactyl-CoA) and 2-hydroxyisobutanoyl-CoA (2-hydroxyisobutyryl-CoA), and is able to mediate protein crotonylation, lactylation and 2-hydroxyisobutyrylation, respectively. Acts as a key regulator of chromosome segregation and kinetochore-microtubule attachment during mitosis by mediating acetylation or crotonylation of target proteins. Catalyzes acetylation of AURKB at kinetochores, increasing AURKB activity and promoting accurate chromosome segregation in mitosis. Acetylates RAN during mitosis, promoting microtubule assembly at mitotic chromosomes. Acetylates NDC80/HEC1 during mitosis, promoting robust kinetochore-microtubule attachment. Catalyzes crotonylation of MAPRE1/EB1, thereby ensuring accurate spindle positioning in mitosis. Catalyzes lactylation of NBN/NBS1 in response to DNA damage, thereby promoting DNA double-strand breaks (DSBs) via homologous recombination (HR). The protein is Histone acetyltransferase KAT5 of Mus musculus (Mouse).